The sequence spans 112 residues: Larval cuticle protein III/IV (112 aa).

Positions 1–16 (MFKILLVCALAALVAA) are cleaved as a signal peptide. In terms of domain architecture, Chitin-binding type R&amp;R spans 31-92 (PDGFKTVVSL…PSSDLLPVAP (62 aa)).

Its function is as follows. Component of the larval cuticle. This is Larval cuticle protein III/IV (Lcp3) from Drosophila miranda (Fruit fly).